Reading from the N-terminus, the 334-residue chain is Phosphate acyltransferase (334 aa).

This sequence belongs to the PlsX family. As to quaternary structure, homodimer. Probably interacts with PlsY.

Its subcellular location is the cytoplasm. The catalysed reaction is a fatty acyl-[ACP] + phosphate = an acyl phosphate + holo-[ACP]. Its pathway is lipid metabolism; phospholipid metabolism. Functionally, catalyzes the reversible formation of acyl-phosphate (acyl-PO(4)) from acyl-[acyl-carrier-protein] (acyl-ACP). This enzyme utilizes acyl-ACP as fatty acyl donor, but not acyl-CoA. This chain is Phosphate acyltransferase, found in Clostridium kluyveri (strain NBRC 12016).